We begin with the raw amino-acid sequence, 377 residues long: Chaperone protein DnaJ 1 (377 aa).

The 65-residue stretch at 4–68 folds into the J domain; that stretch reads DYYQTLGVTR…EIRQRYDQFG (65 aa). Residues 136-218 form a CR-type zinc finger; sequence GGEKEIRIPH…CNGVGRKQET (83 aa). Zn(2+) contacts are provided by Cys-149, Cys-152, Cys-166, Cys-169, Cys-192, Cys-195, Cys-206, and Cys-209. CXXCXGXG motif repeat units follow at residues 149-156, 166-173, 192-199, and 206-213; these read CQVCEGTG, CGTCNGAG, CPTCNGSG, and CEACNGVG.

This sequence belongs to the DnaJ family. In terms of assembly, homodimer. Zn(2+) is required as a cofactor.

It is found in the cytoplasm. Its function is as follows. Participates actively in the response to hyperosmotic and heat shock by preventing the aggregation of stress-denatured proteins and by disaggregating proteins, also in an autonomous, DnaK-independent fashion. Unfolded proteins bind initially to DnaJ; upon interaction with the DnaJ-bound protein, DnaK hydrolyzes its bound ATP, resulting in the formation of a stable complex. GrpE releases ADP from DnaK; ATP binding to DnaK triggers the release of the substrate protein, thus completing the reaction cycle. Several rounds of ATP-dependent interactions between DnaJ, DnaK and GrpE are required for fully efficient folding. Also involved, together with DnaK and GrpE, in the DNA replication of plasmids through activation of initiation proteins. The protein is Chaperone protein DnaJ 1 of Synechocystis sp. (strain ATCC 27184 / PCC 6803 / Kazusa).